We begin with the raw amino-acid sequence, 475 residues long: MSIVYVAGFVDVVAYPKVDPVLYLNLDDVSKCLPLTKPIPLNIEHLPESTIGHTIGLYAVTHGVFCVGVIHSEKFLHLTENLFSNSCVAQATSKFLPYQPLLEMLHTWLPALSLSSLCPTAQNAANTNMFQHVSLCALGRRRGTVAVYSMNLEDAISQFCSISQAEVENIYQDSKNVDINSLPKPVFNIDPHILMAKAIDAGFIKDRLQLLKTDKGVAKIKKLTYLKASEIGKPVTEDISEDMNQHGIVPQGSDDLISVPKSTFLSMLQNNLDNFKQHPRPACFPQYFSPQGAYMPYELYPPQPYSGDNIGYMLPSGSYVPAMFPSRPNKRKREDFDDCVFPGESSLYKDVLNLTKNISQLQDDLKDLKQAAINQPNRYPPHHFSNPYSLDPGHASYFRYAPYGAPKPDQHLLQPLACVQQAPVVQPNYAPPPTEGASNEAPKPSVQEPVHIDASFAQDPVSKLQKMFCDELLNK.

Active-site charge relay system residues include histidine 45, serine 113, and histidine 132. Positions 254–273 (DDLISVPKSTFLSMLQNNLD) are interaction with pAP. The short motif at 327-333 (RPNKRKR) is the Nuclear localization signal element. Residues 426–454 (QPNYAPPPTEGASNEAPKPSVQEPVHIDA) are disordered. An interaction with major capsid protein region spans residues 455–475 (SFAQDPVSKLQKMFCDELLNK).

It belongs to the herpesviridae capsid scaffolding protein family. Homomultimer. Interacts with major capsid protein. As to quaternary structure, exists in a monomer-dimer equilibrium with the dimer being the active species. Capsid scaffolding protein is cleaved by assemblin after formation of the spherical procapsid. As a result, the capsid obtains its mature, icosahedral shape. Cleavages occur at two or more sites: release (R-site) and maturation (M-site).

Its subcellular location is the host cytoplasm. The protein resides in the host nucleus. It catalyses the reaction Cleaves -Ala-|-Ser- and -Ala-|-Ala- bonds in the scaffold protein.. Its function is as follows. Acts as a scaffold protein by binding major capsid protein in the cytoplasm, inducing the nuclear localization of both proteins. Multimerizes in the nucleus such as major capsid protein forms the icosahedral T=16 capsid. Autocatalytic cleavage releases the assembly protein, and subsequently abolishes interaction with major capsid protein. Cleavages products are evicted from the capsid before or during DNA packaging. Functionally, protease that plays an essential role in virion assembly within the nucleus. Catalyzes the cleavage of the assembly protein after formation of the spherical procapsid. By that cleavage, the capsid matures and gains its icosahedral shape. The cleavage sites seem to include -Ala-Ser-, -Ala-Ala-, as well as Ala-Thr bonds. Assemblin and cleavages products are evicted from the capsid before or during DNA packaging. Plays a major role in capsid assembly. Acts as a scaffold protein by binding major capsid protein. Multimerizes in the nucleus such as major capsid protein forms the icosahedral T=16 capsid. Cleaved by assemblin after capsid completion. The cleavages products are evicted from the capsid before or during DNA packaging. This Saimiriine herpesvirus 2 (strain 11) (SaHV-2) protein is Capsid scaffolding protein (17).